Reading from the N-terminus, the 1345-residue chain is Vascular endothelial growth factor receptor 2 (1345 aa).

The signal sequence occupies residues 1-19 (MESKALLAVALWFCVETRA). Topologically, residues 20-762 (ASVGLPGDFL…EGAQEKTNLE (743 aa)) are extracellular. Residues Asn46, Asn98, Asn145, Asn160, and Asn247 are each glycosylated (N-linked (GlcNAc...) asparagine). Ig-like C2-type domains are found at residues 46–111 (NTTL…RDVD), 143–209 (NKNK…INDE), 226–325 (YDVI…TFVR), 330–416 (PFIA…HMVS), 423–542 (PQIG…RVIS), 549–656 (PEIT…LVKQ), and 665–751 (PMIT…TLFI). Residues Cys53 and Cys105 are joined by a disulfide bond. Residues Cys152 and Cys202 are joined by a disulfide bond. A disulfide bridge links Cys248 with Cys309. N-linked (GlcNAc...) asparagine glycans are attached at residues Asn320, Asn376, Asn397, Asn509, Asn521, Asn578, Asn611, Asn617, Asn629, Asn673, Asn702, and Asn719. 2 cysteine pairs are disulfide-bonded: Cys447–Cys528 and Cys569–Cys640. A disulfide bridge connects residues Cys686 and Cys735. The chain crosses the membrane as a helical span at residues 763–783 (VIILVGTAVIAMFFWLLLVIV). Topologically, residues 784-1345 (LRTVKRANEG…SGTTLRSPPV (562 aa)) are cytoplasmic. Residue Tyr799 is modified to Phosphotyrosine. The region spanning 832–1160 (LKLGKPLGRG…FSELVEHLGN (329 aa)) is the Protein kinase domain. Residues 838–846 (LGRGAFGQV) and Lys866 each bind ATP. Tyr949 carries the phosphotyrosine; by autocatalysis modification. A phosphoserine mark is found at Ser980 and Ser982. The residue at position 994 (Tyr994) is a Phosphotyrosine; by autocatalysis. An intrachain disulfide couples Cys1022 to Cys1043. Asp1026 (proton acceptor) is an active-site residue. Tyr1052, Tyr1057, Tyr1173, and Tyr1212 each carry phosphotyrosine; by autocatalysis. 2 positions are modified to phosphoserine: Ser1229 and Ser1233. Thr1236 carries the phosphothreonine modification. Residues 1272–1316 (DRNKLSPSFGGMMPSKSRESVASEGSNQTSGYQSGYHSDDTDTTV) are disordered. The span at 1294-1307 (SEGSNQTSGYQSGY) shows a compositional bias: polar residues. Residues Tyr1303, Tyr1307, and Tyr1317 each carry the phosphotyrosine; by autocatalysis modification.

It belongs to the protein kinase superfamily. Tyr protein kinase family. CSF-1/PDGF receptor subfamily. Homodimer in the presence of bound dimeric VEGFA, VEGFC or VEGFD ligands; monomeric in the absence of bound ligands. Can also form heterodimers with FLT1/VEGFR1 and KDR/VEGFR2. Interacts (tyrosine phosphorylated) with LFYN, NCK1, PLCG1. Interacts (tyrosine-phosphorylated active form preferentially) with DAB2IP (via C2 domain and active form preferentially); the interaction occurs at the late phase of VEGFA response and inhibits KDR/VEGFR2 activity. Interacts with SHBSH2D2A/TSAD, GRB2, MYOF, CBL and PDCD6. Interacts (via C-terminus domain) with ERN1 (via kinase domain); the interaction is facilitated in a XBP1 isoform 1- and vascular endothelial growth factor (VEGF)-dependent manner in endothelial cells. Interacts (via juxtamembrane region) with chaperone PDCL3 (via thioredoxin fold region); the interaction leads to increased KDR/VEGFR2 abundance through inhibition of its ubiquitination and degradation. Interacts (tyrosine phosphorylated) with CCDC88A/GIV (via SH2-like region); binding requires autophosphorylation of the KDR/VEGFR2 C-terminal region. Interacts with isoform 2 of BSG. Interacts with SLC31A1; this interaction is induced upon VEGFA stimulation leading to SLC31A1 and KDR subsequent co-internalization to early endosomes, thereby activating KDR downstream signaling in endothelial cells. In terms of processing, N-glycosylated. Post-translationally, ubiquitinated. Tyrosine phosphorylation of the receptor promotes its poly-ubiquitination, leading to its degradation via the proteasome or lysosomal proteases. Autophosphorylated on tyrosine residues upon ligand binding. Autophosphorylation occurs in trans, i.e. one subunit of the dimeric receptor phosphorylates tyrosine residues on the other subunit. Phosphorylation at Tyr-949 is important for interaction with SH2D2A/TSAD and VEGFA-mediated reorganization of the actin cytoskeleton. Phosphorylation at Tyr-1173 is important for interaction with PLCG1 and SHB. Phosphorylation at Tyr-1212 is important for interaction with NCK1 and FYN. Dephosphorylated by PTPRJ at Tyr-799, Tyr-949, Tyr-994, Tyr-1052, Tyr-1057, Tyr-1173 and Tyr-1212. In terms of processing, the inhibitory disulfide bond between Cys-1022 and Cys-1043 may serve as a specific molecular switch for H(2)S-induced modification that regulates KDR/VEGFR2 function. As to expression, expressed in endothelial cells (at protein level). Detected in embryonic endothelial cells, as well as hematopoietic stem and progenitor cells. Detected in vascular endothelium. Expressed at high levels in adult heart, lung, kidney, brain and skeletal muscle, but is also expressed at lower levels in most other adult tissues.

It localises to the cell junction. Its subcellular location is the endoplasmic reticulum. The protein localises to the cell membrane. It is found in the cytoplasm. The protein resides in the nucleus. It localises to the cytoplasmic vesicle. Its subcellular location is the early endosome. The protein localises to the secreted. It carries out the reaction L-tyrosyl-[protein] + ATP = O-phospho-L-tyrosyl-[protein] + ADP + H(+). Present in an inactive conformation in the absence of bound ligand. Binding of VEGFA, VEGFC or VEGFD leads to dimerization and activation by autophosphorylation on tyrosine residues. May be regulated by hydrogen sulfide (H(2)S) levels via a sensitive intracellular disulfide bond. Functionally, tyrosine-protein kinase that acts as a cell-surface receptor for VEGFA, VEGFC and VEGFD. Plays an essential role in the regulation of angiogenesis, vascular development, vascular permeability, and embryonic hematopoiesis. Promotes proliferation, survival, migration and differentiation of endothelial cells. Promotes reorganization of the actin cytoskeleton. Isoforms lacking a transmembrane domain, such as isoform 2, may function as decoy receptors for VEGFA, VEGFC and/or VEGFD. Isoform 2 plays an important role as a negative regulator of VEGFA- and VEGFC-mediated lymphangiogenesis by limiting the amount of free VEGFA and/or VEGFC and by preventing their binding to FLT4. Modulates FLT1 and FLT4 signaling by forming heterodimers. Binding of vascular growth factors to isoform 1 leads to the activation of several signaling cascades. Activation of PLCG1 leads to the production of the cellular signaling molecules diacylglycerol and inositol 1,4,5-trisphosphate and the activation of protein kinase C. Mediates activation of MAPK1/ERK2, MAPK3/ERK1 and the MAP kinase signaling pathway, as well as of the AKT1 signaling pathway. Mediates phosphorylation of PIK3R1, the regulatory subunit of phosphatidylinositol 3-kinase, reorganization of the actin cytoskeleton and activation of PTK2/FAK1. Required for VEGFA-mediated induction of NOS2 and NOS3, leading to the production of the signaling molecule nitric oxide (NO) by endothelial cells. Phosphorylates PLCG1. Promotes phosphorylation of FYN, NCK1, NOS3, PIK3R1, PTK2/FAK1 and SRC. This chain is Vascular endothelial growth factor receptor 2, found in Mus musculus (Mouse).